Here is a 315-residue protein sequence, read N- to C-terminus: MSEMVNVHGWMEEALSSQDEMKERNQSAYDIISGLCHEERGSIDGEEDDEEEEDGEKPKKRGPKKKKMTKARVERFRVRRVKANARERSRMHGLNDALENLRRVMPCYSKTQKLSKIETLRLARNYIWALSDILEQGQNAEGKGFLEILCKGLSQPTSNLVAGCLQLGPQAMFLDKHEEKSHICDSSLTGHTYNYQSPGLPSPPYGNIDVHHLHLKPSSFKPVMDPSVVTHTLNCTTPPYEGALTPPLSIGGNFSLKQDSSPDMDKSYAFRSPYPALGLGGSHGHASHFHTSVPRYELPIDMAYEPYPHHAIFTE.

The interval 39 to 71 (ERGSIDGEEDDEEEEDGEKPKKRGPKKKKMTKA) is disordered. The segment covering 44 to 55 (DGEEDDEEEEDG) has biased composition (acidic residues). Residues 58–70 (PKKRGPKKKKMTK) are compositionally biased toward basic residues. The bHLH domain occupies 78–130 (VRRVKANARERSRMHGLNDALENLRRVMPCYSKTQKLSKIETLRLARNYIWAL). Ser-89 carries the post-translational modification Phosphoserine.

As to quaternary structure, efficient DNA binding requires dimerization with another bHLH protein. Forms a heterodimer with the bHLH protein hes2, and weakly interacts with hey1/hrt1. Serine or threonine phosphorylation within the basic region may regulate neurogenic activity. In terms of tissue distribution, first expressed weakly at stage 12 in primary neuronal precursors. At stages 18 and 21, strongly expressed in the cranial ganglions, with weaker expression remaining in the spinal cord. Later, strongly expressed at sites of neuronal differentiation, namely the eye, forebrain and cranial ganglions.

Its subcellular location is the nucleus. Probably acts as a transcriptional activator. Mediates neuronal differentiation. Required for the regulation of amacrine cell fate specification in the retina. This is Neurogenic differentiation factor 4 (neurod4) from Xenopus laevis (African clawed frog).